A 78-amino-acid chain; its full sequence is Large ribosomal subunit protein bL28 (78 aa).

This sequence belongs to the bacterial ribosomal protein bL28 family.

This is Large ribosomal subunit protein bL28 from Thermosynechococcus vestitus (strain NIES-2133 / IAM M-273 / BP-1).